The following is a 268-amino-acid chain: ClpXP adapter protein SpxH (268 aa).

Belongs to the SpxH family. Interacts with Spx.

The protein resides in the cytoplasm. Adapter protein required for efficient degradation of Spx by ClpXP under non-stress conditions. Interaction with Spx stabilizes Spx and exposes the C-terminus of Spx for recognition and proteolysis by ClpXP. The polypeptide is ClpXP adapter protein SpxH (Staphylococcus aureus (strain MRSA252)).